A 275-amino-acid polypeptide reads, in one-letter code: MASAHTTQTPFNRLLLTGAAGGLGKVLRETLRPYSHILRLSDIAEMAPAVGDHEEVQVCDLADKDAVHRLVEGVDAILHFGGVSVERPFEEILGANICGVFHIYEAARRHGVKRVIFASSNHVIGFYKQNETIDAHSPRRPDSYYGLSKSYGEDMASFYFDRYGIETVSIRIGSSFPEPQNRRMMSTWLSFDDLTRLLERALYTPDVGHTVVYGVSDNKTVWWDNRFASKLDYAPKDSSEVFRAKVDAQPMPADDDPAMVYQGGAFVASGPFGDK.

NAD(+)-binding positions include 22–23, 42–44, 60–61, and 80–84; these read GL, DIA, DL, and FGGVS. Residues S84 and 120 to 122 each bind substrate; that span reads SNH. The active-site Proton acceptor is the Y145. K149 contributes to the NAD(+) binding site. S174 is a binding site for substrate. S175 provides a ligand contact to NAD(+). A substrate-binding site is contributed by R183.

Belongs to the NAD(P)-dependent epimerase/dehydratase family. Homohexamer.

The enzyme catalyses beta-D-galacturonate + NAD(+) = D-galactaro-1,5-lactone + NADH + H(+). It catalyses the reaction beta-D-glucuronate + NAD(+) = D-glucaro-1,5-lactone + NADH + H(+). The protein operates within carbohydrate acid metabolism; D-galacturonate degradation via prokaryotic oxidative pathway. Functionally, catalyzes the oxidation of beta-D-galacturonate and beta-D-glucuronate to galactarate and D-glucarate, respectively. Cannot use NADP(+) instead of NAD(+) as cosubstrate. The chain is Uronate dehydrogenase (udh) from Pseudomonas syringae pv. tomato (strain ATCC BAA-871 / DC3000).